A 278-amino-acid chain; its full sequence is Large ribosomal subunit protein uL2 (278 aa).

Disordered regions lie at residues P29–G55 and V225–R278. The span at R258 to R278 shows a compositional bias: basic residues.

Belongs to the universal ribosomal protein uL2 family. In terms of assembly, part of the 50S ribosomal subunit. Forms a bridge to the 30S subunit in the 70S ribosome. In terms of processing, the N-terminus is blocked. Post-translationally, phosphorylated on serine and threonine residues.

In terms of biological role, one of the primary rRNA binding proteins. Required for association of the 30S and 50S subunits to form the 70S ribosome, for tRNA binding and peptide bond formation. It has been suggested to have peptidyltransferase activity; this is somewhat controversial. Makes several contacts with the 16S rRNA in the 70S ribosome. This chain is Large ribosomal subunit protein uL2, found in Streptomyces collinus.